We begin with the raw amino-acid sequence, 128 residues long: B2 protein (128 aa).

Residues 1-10 (SLILLVAVQA) form the signal peptide. Disulfide bonds link C26–C57 and C97–C114.

Belongs to the PBP/GOBP family. In terms of processing, N-glycosylated. In terms of tissue distribution, tubular accessory sex gland.

It localises to the secreted. In terms of biological role, may be a carrier protein for lipids. In Tenebrio molitor (Yellow mealworm beetle), this protein is B2 protein.